The following is a 212-amino-acid chain: Thymidine kinase (212 aa).

Residues Ser-11–Thr-18, Asp-43–Arg-45, and Asp-86–Gln-89 each bind ATP. The active-site Proton acceptor is the Glu-87. Residue Phe-119 coordinates substrate. Residues Cys-144, Cys-147, Cys-183, and Cys-186 each contribute to the Zn(2+) site.

It belongs to the thymidine kinase family.

The enzyme catalyses thymidine + ATP = dTMP + ADP + H(+). This Encephalitozoon cuniculi (strain GB-M1) (Microsporidian parasite) protein is Thymidine kinase (TK).